A 188-amino-acid polypeptide reads, in one-letter code: Small ribosomal subunit protein bS16 (188 aa).

Positions 155-188 (IAAASATEEAATEEVAEAAEEAPAAEENNETTEA) are disordered. The segment covering 164-188 (AATEEVAEAAEEAPAAEENNETTEA) has biased composition (acidic residues).

The protein belongs to the bacterial ribosomal protein bS16 family.

The sequence is that of Small ribosomal subunit protein bS16 from Flavobacterium johnsoniae (strain ATCC 17061 / DSM 2064 / JCM 8514 / BCRC 14874 / CCUG 350202 / NBRC 14942 / NCIMB 11054 / UW101) (Cytophaga johnsonae).